The sequence spans 109 residues: Iron-sulfur cluster assembly protein CyaY (109 aa).

This sequence belongs to the frataxin family.

Involved in iron-sulfur (Fe-S) cluster assembly. May act as a regulator of Fe-S biogenesis. This chain is Iron-sulfur cluster assembly protein CyaY, found in Bordetella bronchiseptica (strain ATCC BAA-588 / NCTC 13252 / RB50) (Alcaligenes bronchisepticus).